The chain runs to 602 residues: uncharacterized protein (602 aa).

N-linked (GlcNAc...) asparagine glycosylation is found at Asn-305, Asn-497, and Asn-577.

Post-translationally, N-glycosylated.

The protein localises to the vacuole. This is an uncharacterized protein from Saccharomyces cerevisiae (strain ATCC 204508 / S288c) (Baker's yeast).